The sequence spans 307 residues: Transcription factor bHLH127 (307 aa).

2 disordered regions span residues Ser-41–Gln-68 and Pro-101–His-155. Residues Ala-110–Ser-119 are compositionally biased toward pro residues. One can recognise a bHLH domain in the interval Arg-150 to Leu-199.

The protein belongs to the bHLH protein family. In terms of assembly, homodimer.

Its subcellular location is the nucleus. In Arabidopsis thaliana (Mouse-ear cress), this protein is Transcription factor bHLH127 (BHLH127).